A 278-amino-acid polypeptide reads, in one-letter code: uncharacterized protein (278 aa).

Belongs to the short-chain dehydrogenases/reductases (SDR) family.

This is an uncharacterized protein from Bacillus subtilis (strain 168).